Consider the following 419-residue polypeptide: Serine hydroxymethyltransferase (419 aa).

Residues Leu-119 and 123–125 (GHL) contribute to the (6S)-5,6,7,8-tetrahydrofolate site. At Lys-228 the chain carries N6-(pyridoxal phosphate)lysine.

The protein belongs to the SHMT family. As to quaternary structure, homodimer. The cofactor is pyridoxal 5'-phosphate.

It is found in the cytoplasm. It carries out the reaction (6R)-5,10-methylene-5,6,7,8-tetrahydrofolate + glycine + H2O = (6S)-5,6,7,8-tetrahydrofolate + L-serine. It functions in the pathway one-carbon metabolism; tetrahydrofolate interconversion. The protein operates within amino-acid biosynthesis; glycine biosynthesis; glycine from L-serine: step 1/1. Functionally, catalyzes the reversible interconversion of serine and glycine with tetrahydrofolate (THF) serving as the one-carbon carrier. This reaction serves as the major source of one-carbon groups required for the biosynthesis of purines, thymidylate, methionine, and other important biomolecules. Also exhibits THF-independent aldolase activity toward beta-hydroxyamino acids, producing glycine and aldehydes, via a retro-aldol mechanism. This is Serine hydroxymethyltransferase from Desulfosudis oleivorans (strain DSM 6200 / JCM 39069 / Hxd3) (Desulfococcus oleovorans).